The primary structure comprises 320 residues: Ferrochelatase (320 aa).

Histidine 194 and glutamate 275 together coordinate Fe cation.

The protein belongs to the ferrochelatase family.

The protein localises to the cytoplasm. It catalyses the reaction heme b + 2 H(+) = protoporphyrin IX + Fe(2+). Its pathway is porphyrin-containing compound metabolism; protoheme biosynthesis; protoheme from protoporphyrin-IX: step 1/1. Its function is as follows. Catalyzes the ferrous insertion into protoporphyrin IX. This chain is Ferrochelatase, found in Vibrio parahaemolyticus serotype O3:K6 (strain RIMD 2210633).